A 142-amino-acid chain; its full sequence is Transcription antitermination protein NusB (142 aa).

It belongs to the NusB family.

Involved in transcription antitermination. Required for transcription of ribosomal RNA (rRNA) genes. Binds specifically to the boxA antiterminator sequence of the ribosomal RNA (rrn) operons. This Streptococcus uberis (strain ATCC BAA-854 / 0140J) protein is Transcription antitermination protein NusB.